Reading from the N-terminus, the 227-residue chain is ATP-dependent dethiobiotin synthetase BioD (227 aa).

13–18 (EVGKSV) provides a ligand contact to ATP. Position 17 (Ser17) interacts with Mg(2+). Residue Lys38 is part of the active site. Residue Ser42 coordinates substrate. ATP contacts are provided by residues Asp55, 116-119 (EGAG), and 176-177 (ND). Mg(2+) is bound by residues Asp55 and Glu116.

This sequence belongs to the dethiobiotin synthetase family. In terms of assembly, homodimer. Requires Mg(2+) as cofactor.

It is found in the cytoplasm. The catalysed reaction is (7R,8S)-7,8-diammoniononanoate + CO2 + ATP = (4R,5S)-dethiobiotin + ADP + phosphate + 3 H(+). Its pathway is cofactor biosynthesis; biotin biosynthesis; biotin from 7,8-diaminononanoate: step 1/2. In terms of biological role, catalyzes a mechanistically unusual reaction, the ATP-dependent insertion of CO2 between the N7 and N8 nitrogen atoms of 7,8-diaminopelargonic acid (DAPA, also called 7,8-diammoniononanoate) to form a ureido ring. The sequence is that of ATP-dependent dethiobiotin synthetase BioD from Serratia marcescens.